The primary structure comprises 464 residues: Argininosuccinate lyase (464 aa).

Belongs to the lyase 1 family. Argininosuccinate lyase subfamily.

The protein resides in the cytoplasm. It catalyses the reaction 2-(N(omega)-L-arginino)succinate = fumarate + L-arginine. Its pathway is amino-acid biosynthesis; L-arginine biosynthesis; L-arginine from L-ornithine and carbamoyl phosphate: step 3/3. The sequence is that of Argininosuccinate lyase from Pseudomonas savastanoi pv. phaseolicola (strain 1448A / Race 6) (Pseudomonas syringae pv. phaseolicola (strain 1448A / Race 6)).